Reading from the N-terminus, the 201-residue chain is Ras-related protein Rab-9B (201 aa).

Valine 18, glycine 19, lysine 20, serine 21, serine 22, aspartate 33, serine 34, alanine 36, histidine 38, and threonine 39 together coordinate GTP. Serine 21 contributes to the Mg(2+) binding site. A Switch 1 motif is present at residues 31-42 (KFDSQAFHTIGV). Phosphoserine is present on serine 34. Residues threonine 39 and aspartate 62 each contribute to the Mg(2+) site. A Switch 2 motif is present at residues 64–78 (AGQERFKSLRTPFYR). Positions 65, 124, 125, 155, and 156 each coordinate GTP. S-geranylgeranyl cysteine attachment occurs at residues cysteine 200 and cysteine 201.

It belongs to the small GTPase superfamily. Rab family. In terms of assembly, interacts (GTP-bound form) with SGSM1; the GDP-bound form has much lower affinity for SGSM1. The GTP-bound form but not the GDP-bound form interacts with HPS4 and the BLOC-3 complex (heterodimer of HPS1 and HPS4) but does not interact with HPS1 alone. Interacts (GTP-bound form) with NDE1. Requires Mg(2+) as cofactor.

It is found in the cell membrane. The protein resides in the cytoplasmic vesicle. The protein localises to the phagosome membrane. It catalyses the reaction GTP + H2O = GDP + phosphate + H(+). Regulated by guanine nucleotide exchange factors (GEFs) which promote the exchange of bound GDP for free GTP. Regulated by GTPase activating proteins (GAPs) which increase the GTP hydrolysis activity. Inhibited by GDP dissociation inhibitors (GDIs). In terms of biological role, the small GTPases Rab are key regulators of intracellular membrane trafficking, from the formation of transport vesicles to their fusion with membranes. Rabs cycle between an inactive GDP-bound form and an active GTP-bound form that is able to recruit to membranes different sets of downstream effectors directly responsible for vesicle formation, movement, tethering and fusion. RAB9B is involved in the transport of proteins between the endosomes and the trans Golgi network. May use NDE1/NDEL1 as an effector to interact with the dynein motor complex in order to control retrograde trafficking of RAB9-associated late endosomes to the TGN. This chain is Ras-related protein Rab-9B (RAB9B), found in Pongo abelii (Sumatran orangutan).